We begin with the raw amino-acid sequence, 209 residues long: Kynurenine formamidase (209 aa).

Trp20 contacts substrate. Zn(2+) contacts are provided by His50, His54, and Asp56. The active-site Proton donor/acceptor is the His60. Positions 161 and 173 each coordinate Zn(2+).

This sequence belongs to the Cyclase 1 superfamily. KynB family. Homodimer. Requires Zn(2+) as cofactor.

The enzyme catalyses N-formyl-L-kynurenine + H2O = L-kynurenine + formate + H(+). The protein operates within amino-acid degradation; L-tryptophan degradation via kynurenine pathway; L-kynurenine from L-tryptophan: step 2/2. In terms of biological role, catalyzes the hydrolysis of N-formyl-L-kynurenine to L-kynurenine, the second step in the kynurenine pathway of tryptophan degradation. This Bacillus thuringiensis (strain Al Hakam) protein is Kynurenine formamidase.